The following is a 217-amino-acid chain: ATP-dependent Clp protease proteolytic subunit 3 (217 aa).

Low complexity predominate over residues 1–13 (MSPFTAGPAPART). A disordered region spans residues 1 to 23 (MSPFTAGPAPARTPRAEEGDTPA). Serine 108 (nucleophile) is an active-site residue. The active site involves histidine 133.

It belongs to the peptidase S14 family. As to quaternary structure, fourteen ClpP subunits assemble into 2 heptameric rings which stack back to back to give a disk-like structure with a central cavity, resembling the structure of eukaryotic proteasomes.

It localises to the cytoplasm. The enzyme catalyses Hydrolysis of proteins to small peptides in the presence of ATP and magnesium. alpha-casein is the usual test substrate. In the absence of ATP, only oligopeptides shorter than five residues are hydrolyzed (such as succinyl-Leu-Tyr-|-NHMec, and Leu-Tyr-Leu-|-Tyr-Trp, in which cleavage of the -Tyr-|-Leu- and -Tyr-|-Trp bonds also occurs).. In terms of biological role, cleaves peptides in various proteins in a process that requires ATP hydrolysis. Has a chymotrypsin-like activity. Plays a major role in the degradation of misfolded proteins. This is ATP-dependent Clp protease proteolytic subunit 3 from Streptomyces coelicolor (strain ATCC BAA-471 / A3(2) / M145).